Here is a 135-residue protein sequence, read N- to C-terminus: Ribonuclease P protein component (135 aa).

The protein belongs to the RnpA family. Consists of a catalytic RNA component (M1 or rnpB) and a protein subunit.

It carries out the reaction Endonucleolytic cleavage of RNA, removing 5'-extranucleotides from tRNA precursor.. Functionally, RNaseP catalyzes the removal of the 5'-leader sequence from pre-tRNA to produce the mature 5'-terminus. It can also cleave other RNA substrates such as 4.5S RNA. The protein component plays an auxiliary but essential role in vivo by binding to the 5'-leader sequence and broadening the substrate specificity of the ribozyme. In Pseudomonas paraeruginosa (strain DSM 24068 / PA7) (Pseudomonas aeruginosa (strain PA7)), this protein is Ribonuclease P protein component.